A 127-amino-acid polypeptide reads, in one-letter code: Aspartate 1-decarboxylase (127 aa).

Residue Ser25 is the Schiff-base intermediate with substrate; via pyruvic acid of the active site. The residue at position 25 (Ser25) is a Pyruvic acid (Ser). Thr57 contributes to the substrate binding site. Residue Tyr58 is the Proton donor of the active site. 73 to 75 (GAA) is a binding site for substrate.

The protein belongs to the PanD family. Heterooctamer of four alpha and four beta subunits. Pyruvate serves as cofactor. Post-translationally, is synthesized initially as an inactive proenzyme, which is activated by self-cleavage at a specific serine bond to produce a beta-subunit with a hydroxyl group at its C-terminus and an alpha-subunit with a pyruvoyl group at its N-terminus.

The protein resides in the cytoplasm. The catalysed reaction is L-aspartate + H(+) = beta-alanine + CO2. It functions in the pathway cofactor biosynthesis; (R)-pantothenate biosynthesis; beta-alanine from L-aspartate: step 1/1. Functionally, catalyzes the pyruvoyl-dependent decarboxylation of aspartate to produce beta-alanine. This chain is Aspartate 1-decarboxylase, found in Aliarcobacter butzleri (strain RM4018) (Arcobacter butzleri).